A 194-amino-acid chain; its full sequence is Histone H1.0 (194 aa).

Met1 is subject to N-acetylmethionine. Over residues 1–11 (MTENSTSAPAA) the composition is skewed to low complexity. Residues 1-29 (MTENSTSAPAAKPKRAKASKKSTDHPKYS) form a disordered region. Thr2 bears the N-acetylthreonine; in Histone H1.0, N-terminally processed mark. An H15 domain is found at 24-97 (DHPKYSDMVV…GASGSFRLAK (74 aa)). Residue Arg42 is modified to Citrulline. Positions 84-194 (TKGVGASGSF…SSAKRAGKKK (111 aa)) are disordered. Ser104 carries the ADP-ribosylserine modification. Residues 105–194 (VAFKKTKKEI…SSAKRAGKKK (90 aa)) show a composition bias toward basic residues.

The protein belongs to the histone H1/H5 family. In terms of processing, ADP-ribosylated on Ser-104 in response to DNA damage.

The protein localises to the nucleus. It is found in the chromosome. Its function is as follows. Histones H1 are necessary for the condensation of nucleosome chains into higher-order structures. The histones H1.0 are found in cells that are in terminal stages of differentiation or that have low rates of cell division. This chain is Histone H1.0 (H1-0), found in Pongo abelii (Sumatran orangutan).